The following is a 1171-amino-acid chain: ATP-dependent helicase/deoxyribonuclease subunit B (1171 aa).

The UvrD-like helicase ATP-binding domain occupies methionine 1 to alanine 390. Residue glycine 8–serine 15 participates in ATP binding. The UvrD-like helicase C-terminal domain maps to methionine 281–aspartate 587. The [4Fe-4S] cluster site is built by cysteine 805, cysteine 1129, cysteine 1132, and cysteine 1138.

The protein belongs to the helicase family. AddB/RexB type 1 subfamily. As to quaternary structure, heterodimer of AddA and AddB. Mg(2+) serves as cofactor. The cofactor is [4Fe-4S] cluster.

Its function is as follows. The heterodimer acts as both an ATP-dependent DNA helicase and an ATP-dependent, dual-direction single-stranded exonuclease. Recognizes the chi site generating a DNA molecule suitable for the initiation of homologous recombination. The AddB subunit has 5' -&gt; 3' nuclease activity but not helicase activity. This Bacillus cereus (strain ATCC 10987 / NRS 248) protein is ATP-dependent helicase/deoxyribonuclease subunit B.